The following is a 124-amino-acid chain: Small ribosomal subunit protein uS12c (124 aa).

Residues 104–124 (SGGVKDRTQRRSKYGVKKPKS) form a disordered region. The segment covering 113-124 (RRSKYGVKKPKS) has biased composition (basic residues).

It belongs to the universal ribosomal protein uS12 family. Part of the 30S ribosomal subunit.

It is found in the plastid. Its subcellular location is the chloroplast. In terms of biological role, with S4 and S5 plays an important role in translational accuracy. Located at the interface of the 30S and 50S subunits. The polypeptide is Small ribosomal subunit protein uS12c (rps12) (Thalassiosira pseudonana (Marine diatom)).